The primary structure comprises 908 residues: Protein translocase subunit SecA (908 aa).

ATP contacts are provided by residues Gln-87, 105–109 (GEGKT), and Asp-512. The segment at 865 to 908 (GGDDGSDEMMAHTPMIRDGDKVGRNDPCPCGSGRKYKQCHGKLS) is disordered. A compositionally biased stretch (basic and acidic residues) spans 879–888 (MIRDGDKVGR). Residues Cys-892, Cys-894, Cys-903, and His-904 each coordinate Zn(2+). Residues 898 to 908 (RKYKQCHGKLS) are compositionally biased toward basic residues.

This sequence belongs to the SecA family. In terms of assembly, monomer and homodimer. Part of the essential Sec protein translocation apparatus which comprises SecA, SecYEG and auxiliary proteins SecDF-YajC and YidC. Zn(2+) serves as cofactor.

The protein localises to the cell inner membrane. The protein resides in the cytoplasm. It catalyses the reaction ATP + H2O + cellular proteinSide 1 = ADP + phosphate + cellular proteinSide 2.. In terms of biological role, part of the Sec protein translocase complex. Interacts with the SecYEG preprotein conducting channel. Has a central role in coupling the hydrolysis of ATP to the transfer of proteins into and across the cell membrane, serving both as a receptor for the preprotein-SecB complex and as an ATP-driven molecular motor driving the stepwise translocation of polypeptide chains across the membrane. In Shewanella sp. (strain MR-7), this protein is Protein translocase subunit SecA.